Consider the following 363-residue polypeptide: Probable auxin efflux carrier component 5a (363 aa).

10 helical membrane-spanning segments follow: residues 7–27, 39–59, 72–92, 103–123, 134–154, 222–242, 246–266, 281–301, 307–327, and 342–362; these read VYKV…GYGS, CDAV…FEFT, VAAD…WARF, SITS…VPMA, LVVQ…LFVL, FVGI…PSAF, VLIM…LFMA, LGLV…SIAV, VLRV…FIFA, and IFGM…LELI.

This sequence belongs to the auxin efflux carrier (TC 2.A.69.1) family. In terms of tissue distribution, expressed in leaves, shoot apex and panicles. Expressed in roots, stem bases, stems, leaves and young panicles.

The protein resides in the membrane. Its function is as follows. May act as a component of the auxin efflux carrier. In Oryza sativa subsp. japonica (Rice), this protein is Probable auxin efflux carrier component 5a.